Consider the following 533-residue polypeptide: Flavin-containing monooxygenase 5 (533 aa).

Arg-5 is subject to Dimethylated arginine. FAD-binding positions include 10 to 14 (GGGVS), Glu-33, and 41 to 42 (LW). At Ser-54 the chain carries Phosphoserine. Tyr-56 is subject to Phosphotyrosine. Position 58 is a phosphoserine (Ser-58). 62–63 (NT) is an FAD binding site. 196–199 (SGGD) contributes to the NADP(+) binding site. Ser-280 is modified (phosphoserine). Residue Thr-284 is modified to Phosphothreonine. Ser-401 is modified (phosphoserine). The chain crosses the membrane as a helical span at residues 510–530 (MVSAVTTGCFMLAVVFFAIIM).

It belongs to the FMO family. The cofactor is FAD. Expressed in liver.

It localises to the microsome membrane. The protein localises to the endoplasmic reticulum membrane. It carries out the reaction N,N-dimethylaniline + NADPH + O2 + H(+) = N,N-dimethylaniline N-oxide + NADP(+) + H2O. The enzyme catalyses NADPH + O2 + H(+) = H2O2 + NADP(+). The catalysed reaction is heptan-2-one + NADPH + O2 + H(+) = pentyl acetate + NADP(+) + H2O. It catalyses the reaction octan-3-one + NADPH + O2 + H(+) = pentyl propanoate + NADP(+) + H2O. It carries out the reaction octan-3-one + NADPH + O2 + H(+) = ethyl hexanoate + NADP(+) + H2O. The enzyme catalyses hexan-3-one + NADPH + O2 + H(+) = ethyl butanoate + NADP(+) + H2O. The catalysed reaction is hexan-3-one + NADPH + O2 + H(+) = propyl propanoate + NADP(+) + H2O. It catalyses the reaction heptan-4-one + NADPH + O2 + H(+) = propyl butanoate + NADP(+) + H2O. It carries out the reaction (2E)-geranial + NADPH + O2 + H(+) = (1E)-2,6-dimethylhepta-1,5-dien-1-yl formate + NADP(+) + H2O. The enzyme catalyses sulcatone + NADPH + O2 + H(+) = 4-methylpent-3-en-1-yl acetate + NADP(+) + H2O. Functionally, acts as a Baeyer-Villiger monooxygenase on a broad range of substrates. Catalyzes the insertion of an oxygen atom into a carbon-carbon bond adjacent to a carbonyl, which converts ketones to esters. Active on diverse carbonyl compounds, whereas soft nucleophiles are mostly non- or poorly reactive. In contrast with other forms of FMO it is non- or poorly active on 'classical' substrates such as drugs, pesticides, and dietary components containing soft nucleophilic heteroatoms. Able to oxidize drug molecules bearing a carbonyl group on an aliphatic chain, such as nabumetone and pentoxifylline. Also, in the absence of substrates, shows slow but yet significant NADPH oxidase activity. Acts as a positive modulator of cholesterol biosynthesis as well as glucose homeostasis, promoting metabolic aging via pleiotropic effects. The chain is Flavin-containing monooxygenase 5 (FMO5) from Cavia porcellus (Guinea pig).